The primary structure comprises 101 residues: Urease subunit beta (101 aa).

It belongs to the urease beta subunit family. As to quaternary structure, heterotrimer of UreA (gamma), UreB (beta) and UreC (alpha) subunits. Three heterotrimers associate to form the active enzyme.

It is found in the cytoplasm. It catalyses the reaction urea + 2 H2O + H(+) = hydrogencarbonate + 2 NH4(+). It functions in the pathway nitrogen metabolism; urea degradation; CO(2) and NH(3) from urea (urease route): step 1/1. In Rhizobium etli (strain CIAT 652), this protein is Urease subunit beta.